Here is a 485-residue protein sequence, read N- to C-terminus: Glutamate--tRNA ligase (485 aa).

A 'HIGH' region motif is present at residues proline 11–asparagine 21. The 'KMSKS' region signature appears at lysine 255 to arginine 259. Lysine 258 serves as a coordination point for ATP.

Belongs to the class-I aminoacyl-tRNA synthetase family. Glutamate--tRNA ligase type 1 subfamily. In terms of assembly, monomer.

It localises to the cytoplasm. It carries out the reaction tRNA(Glu) + L-glutamate + ATP = L-glutamyl-tRNA(Glu) + AMP + diphosphate. Its function is as follows. Catalyzes the attachment of glutamate to tRNA(Glu) in a two-step reaction: glutamate is first activated by ATP to form Glu-AMP and then transferred to the acceptor end of tRNA(Glu). This Streptococcus gordonii (strain Challis / ATCC 35105 / BCRC 15272 / CH1 / DL1 / V288) protein is Glutamate--tRNA ligase.